The following is a 121-amino-acid chain: Small ribosomal subunit protein uS13 (121 aa).

Positions 92-121 (RKGLPMRGQRTRTNARTRKGPRRAAQALKK) are disordered.

It belongs to the universal ribosomal protein uS13 family. As to quaternary structure, part of the 30S ribosomal subunit. Forms a loose heterodimer with protein S19. Forms two bridges to the 50S subunit in the 70S ribosome.

Functionally, located at the top of the head of the 30S subunit, it contacts several helices of the 16S rRNA. In the 70S ribosome it contacts the 23S rRNA (bridge B1a) and protein L5 of the 50S subunit (bridge B1b), connecting the 2 subunits; these bridges are implicated in subunit movement. Contacts the tRNAs in the A and P-sites. This chain is Small ribosomal subunit protein uS13, found in Burkholderia cenocepacia (strain ATCC BAA-245 / DSM 16553 / LMG 16656 / NCTC 13227 / J2315 / CF5610) (Burkholderia cepacia (strain J2315)).